We begin with the raw amino-acid sequence, 789 residues long: Aryl hydrocarbon receptor nuclear translocator (789 aa).

Over residues 1 to 14 the composition is skewed to polar residues; the sequence is MAATTANPEMTSDV. The disordered stretch occupies residues 1–97; it reads MAATTANPEM…RLARENHSEI (97 aa). Residue Ala2 is modified to N-acetylalanine. A compositionally biased stretch (gly residues) spans 26-35; it reads SGPGIQGGGA. Lys58 is covalently cross-linked (Glycyl lysine isopeptide (Lys-Gly) (interchain with G-Cter in SUMO2)). Over residues 60–97 the composition is skewed to basic and acidic residues; sequence LRCDDDQMSNDKERFARSDDEQSSADKERLARENHSEI. Ser77 carries the phosphoserine modification. The segment at 88 to 128 is DNA-binding; that stretch reads RLARENHSEIERRRRNKMTAYITELSDMVPTCSALARKPDK. A bHLH domain is found at 89-142; it reads LARENHSEIERRRRNKMTAYITELSDMVPTCSALARKPDKLTILRMAVSHMKSL. The interval 112–168 is required for heterodimer formation with HIF1A; it reads LSDMVPTCSALARKPDKLTILRMAVSHMKSLRGTGNTSTDGSYKPSFLTDQELKHLI. Residues 112 to 264 are required for heterodimer formation with EPAS1; that stretch reads LSDMVPTCSA…MCMGSRRSFI (153 aa). PAS domains are found at residues 161–235 and 349–419; these read DQEL…LTGR and PNCT…VKLK. Residues 167–171 are mediates the transcription activity and dimerization of the AHR:ARNT complex; that stretch reads LILEA. The PAC domain maps to 424-467; sequence SVMFRFRSKNQEWLWMRTSSFTFQNPYSDEIEYIICTNTNVKNS. Residues 465–481 are compositionally biased toward polar residues; the sequence is KNSSQEPRPTLSNTIQR. 2 disordered regions span residues 465 to 492 and 672 to 789; these read KNSSQEPRPTLSNTIQRPQLGPTANLPL and TPSS…PFSE. Over residues 672-696 the composition is skewed to low complexity; the sequence is TPSSFSSMSLPGAPTASPGAAAYPS. Residues 708–719 show a composition bias toward polar residues; that stretch reads TGQTAGQFQTRT. 2 stretches are compositionally biased toward low complexity: residues 723–733 and 743–756; these read VGVWPQWQGQQ and QHVQQPPAQQPGQP.

Monomer. Homodimer only upon binding to a DNA. Efficient DNA binding requires dimerization with another bHLH protein. Interacts with TACC3. Interacts with HIF1A, EPAS1, NPAS1 and NPAS3; forms a heterodimer that binds core DNA sequence 5'-TACGTG-3' within the hypoxia response element (HRE) of target gene promoters. Forms a heterodimer with AHRR, as well as with other bHLH proteins. Interacts with NOCA7. Interacts with TACC3. Interacts with AHR; the heterodimer ARNT:AHR binds to core DNA sequence 5'-TGCGTG-3' within the dioxin response element (DRE) of target gene promoters and activates their transcription. Interacts with SIM1 and NPAS4.

It is found in the nucleus. Functionally, required for activity of the AHR. Upon ligand binding, AHR translocates into the nucleus, where it heterodimerizes with ARNT and induces transcription by binding to xenobiotic response elements (XRE). Not required for the ligand-binding subunit to translocate from the cytosol to the nucleus after ligand binding. The complex initiates transcription of genes involved in the regulation of a variety of biological processes, including angiogenesis, hematopoiesis, drug and lipid metabolism, cell motility and immune modulation. The heterodimer binds to core DNA sequence 5'-TACGTG-3' within the hypoxia response element (HRE) of target gene promoters and functions as a transcriptional regulator of the adaptive response to hypoxia. The heterodimer ARNT:AHR binds to core DNA sequence 5'-TGCGTG-3' within the dioxin response element (DRE) of target gene promoters and activates their transcription. The chain is Aryl hydrocarbon receptor nuclear translocator from Homo sapiens (Human).